The chain runs to 689 residues: MTQQTFLVEIGTEELPPKALRSLAESFAANFTAELDNANLSHGEVSWYAAPRRLAVKVANLSAAQADREVEKRGPAIAQAFDAEGKPSKAAEGWARGCGITVDQAERLVTDKGEWLLYRAHVKGQPAQLLLAGMVNTALSKLPIPKLMRWGDKETQFVRPVHTVTLLLGTEVIPGTVLGINSDRVIRGHRFMGEAEFTIDSADQYPQILLERGKVIADYELRKSIIKRDAEQAAQQIGGVADLSESLLEEVASLVEWPVVLTAKFEEKFLAVPAEALVYTMKGDQKYFPVYDTAGHLMPHFIFVANIESKDPQQIISGNEKVVRPRLADAEFFFKTDRKKRLEDNLPRLETVLFQQQLGTLRDKTDRIQALAGWVAAQIGADVNHATRAGLLSKCDLMTNMVFEFTDTQGVMGMHYARHDGEAEDVAVALNEQYQPRFAGDDLPSNPVACALAIADKMDTLAGIFGIGQHPKGDKDPFALRRAALGVLRIIVEKNLSLDLQTLTEEAVRLYGSKLTNAKVVDDVIEFMLGRFRAWYQDEGHSVDTIQAVLARRPTKPADFDARVKAVTYFRTLDAAAALAAANKRVSNILAKSTDTLNDHVHASILKEPAELKLATHLVVLRDQLEPVFAAGQYKEALVELAALRETVDEFFESVMVMAEDDAVRVNRLTLLSKLRELFLQVADISLLQ.

Belongs to the class-II aminoacyl-tRNA synthetase family. Tetramer of two alpha and two beta subunits.

The protein resides in the cytoplasm. The enzyme catalyses tRNA(Gly) + glycine + ATP = glycyl-tRNA(Gly) + AMP + diphosphate. This is Glycine--tRNA ligase beta subunit from Yersinia pseudotuberculosis serotype O:1b (strain IP 31758).